Reading from the N-terminus, the 412-residue chain is Argininosuccinate synthase (412 aa).

Residues 10–18 and A36 contribute to the ATP site; that span reads AYSGGLDTS. Residues Y87 and S92 each coordinate L-citrulline. 115 to 123 is a binding site for ATP; it reads SHGATGKGN. L-aspartate contacts are provided by T119, N123, and D124. Residue N123 coordinates L-citrulline. L-citrulline-binding residues include R127, S180, S189, E270, and Y282.

This sequence belongs to the argininosuccinate synthase family. In terms of assembly, homotetramer.

The enzyme catalyses L-citrulline + L-aspartate + ATP = 2-(N(omega)-L-arginino)succinate + AMP + diphosphate + H(+). The protein operates within amino-acid biosynthesis; L-arginine biosynthesis; L-arginine from L-ornithine and carbamoyl phosphate: step 2/3. Its pathway is nitrogen metabolism; urea cycle; (N(omega)-L-arginino)succinate from L-aspartate and L-citrulline: step 1/1. The polypeptide is Argininosuccinate synthase (Aedes aegypti (Yellowfever mosquito)).